We begin with the raw amino-acid sequence, 398 residues long: Phosphoglycerate kinase (398 aa).

Substrate is bound by residues 21-23 (DFN), R36, 59-62 (HLGR), R119, and R157. Residues K208, G296, E327, and 354–357 (GGDS) contribute to the ATP site.

The protein belongs to the phosphoglycerate kinase family. Monomer.

It is found in the cytoplasm. The catalysed reaction is (2R)-3-phosphoglycerate + ATP = (2R)-3-phospho-glyceroyl phosphate + ADP. It functions in the pathway carbohydrate degradation; glycolysis; pyruvate from D-glyceraldehyde 3-phosphate: step 2/5. The protein is Phosphoglycerate kinase of Streptococcus equi subsp. zooepidemicus (strain H70).